Reading from the N-terminus, the 228-residue chain is Phosphoribosylformylglycinamidine synthase subunit PurQ (228 aa).

The 224-residue stretch at 3-226 (FAVIVFPGSN…VNYWRETHVV (224 aa)) folds into the Glutamine amidotransferase type-1 domain. Cys86 acts as the Nucleophile in catalysis. Residues His195 and Glu197 contribute to the active site.

As to quaternary structure, part of the FGAM synthase complex composed of 1 PurL, 1 PurQ and 2 PurS subunits.

It localises to the cytoplasm. It carries out the reaction N(2)-formyl-N(1)-(5-phospho-beta-D-ribosyl)glycinamide + L-glutamine + ATP + H2O = 2-formamido-N(1)-(5-O-phospho-beta-D-ribosyl)acetamidine + L-glutamate + ADP + phosphate + H(+). The enzyme catalyses L-glutamine + H2O = L-glutamate + NH4(+). It functions in the pathway purine metabolism; IMP biosynthesis via de novo pathway; 5-amino-1-(5-phospho-D-ribosyl)imidazole from N(2)-formyl-N(1)-(5-phospho-D-ribosyl)glycinamide: step 1/2. Functionally, part of the phosphoribosylformylglycinamidine synthase complex involved in the purines biosynthetic pathway. Catalyzes the ATP-dependent conversion of formylglycinamide ribonucleotide (FGAR) and glutamine to yield formylglycinamidine ribonucleotide (FGAM) and glutamate. The FGAM synthase complex is composed of three subunits. PurQ produces an ammonia molecule by converting glutamine to glutamate. PurL transfers the ammonia molecule to FGAR to form FGAM in an ATP-dependent manner. PurS interacts with PurQ and PurL and is thought to assist in the transfer of the ammonia molecule from PurQ to PurL. The sequence is that of Phosphoribosylformylglycinamidine synthase subunit PurQ from Geobacillus thermodenitrificans (strain NG80-2).